Here is a 1133-residue protein sequence, read N- to C-terminus: Early transcription factor large subunit homolog (1133 aa).

Residues 52-352 form the Helicase ATP-binding domain; the sequence is KGGRAFFPCD…PNGQPLQRQQ (301 aa). Residue 99-106 participates in ATP binding; sequence WQTGTGKS. Positions 281–284 match the DEAH box motif; the sequence is DEIH. The region spanning 524–724 is the Helicase C-terminal domain; the sequence is MMKDILSIIR…EGDKALRKHA (201 aa).

Belongs to the DEAD box helicase family. DEAH subfamily.

It localises to the virion. It carries out the reaction ATP + H2O = ADP + phosphate + H(+). Functionally, putative initation factor. The sequence is that of Early transcription factor large subunit homolog from Ornithodoros (relapsing fever ticks).